A 161-amino-acid chain; its full sequence is Type IV major fimbrial protein FimA (161 aa).

Positions Met-1–Gly-7 are cleaved as a propeptide — leader sequence. The residue at position 8 (Phe-8) is an N-methylphenylalanine. A helical transmembrane segment spans residues Phe-8–Ile-28. A disulfide bond links Cys-63 and Cys-106.

Belongs to the N-Me-Phe pilin family. The pili are polar flexible filaments of about 5.4 nanometers diameter and 2.5 micrometers average length; they consist of only a single polypeptide chain arranged in a helical configuration of five subunits per turn in the assembled pilus.

It is found in the fimbrium. The protein localises to the membrane. Its function is as follows. Major component of the type IV fimbriae that plays an essential role in twitching motility, natural transformation, and protease secretion. The sequence is that of Type IV major fimbrial protein FimA (fimA) from Dichelobacter nodosus (Bacteroides nodosus).